The following is a 454-amino-acid chain: tRNA-2-methylthio-N(6)-dimethylallyladenosine synthase (454 aa).

The 117-residue stretch at 6 to 122 folds into the MTTase N-terminal domain; that stretch reads RRYHITTFGC…LQDLLQEVLA (117 aa). [4Fe-4S] cluster-binding residues include C15, C51, C85, C157, C161, and C164. A Radical SAM core domain is found at 143–380; it reads RESTVTAWVN…NHLVAIKAAE (238 aa). Residues 383 to 447 enclose the TRAM domain; the sequence is QRYLGRIEEV…AFSLTGEPVK (65 aa).

It belongs to the methylthiotransferase family. MiaB subfamily. Monomer. The cofactor is [4Fe-4S] cluster.

The protein localises to the cytoplasm. The enzyme catalyses N(6)-dimethylallyladenosine(37) in tRNA + (sulfur carrier)-SH + AH2 + 2 S-adenosyl-L-methionine = 2-methylsulfanyl-N(6)-dimethylallyladenosine(37) in tRNA + (sulfur carrier)-H + 5'-deoxyadenosine + L-methionine + A + S-adenosyl-L-homocysteine + 2 H(+). Functionally, catalyzes the methylthiolation of N6-(dimethylallyl)adenosine (i(6)A), leading to the formation of 2-methylthio-N6-(dimethylallyl)adenosine (ms(2)i(6)A) at position 37 in tRNAs that read codons beginning with uridine. This Gloeothece citriformis (strain PCC 7424) (Cyanothece sp. (strain PCC 7424)) protein is tRNA-2-methylthio-N(6)-dimethylallyladenosine synthase.